A 218-amino-acid polypeptide reads, in one-letter code: Glutathione S-transferase Mu 1 (218 aa).

Positions 2-88 (PMILGYWDIR…YIARKHNLCG (87 aa)) constitute a GST N-terminal domain. Residues 7-8 (YW), 43-46 (RSQW), K50, 59-60 (NL), and 72-73 (QS) each bind glutathione. The GST C-terminal domain occupies 90 to 208 (TEEEMIRVDI…KSSRFLPGPL (119 aa)). Residue Y116 coordinates substrate.

The protein belongs to the GST superfamily. Mu family. In terms of assembly, homodimer.

It localises to the cytoplasm. It carries out the reaction RX + glutathione = an S-substituted glutathione + a halide anion + H(+). The catalysed reaction is prostaglandin A2 + glutathione = prostaglandin A2-S-(R)-glutathione. It catalyses the reaction prostaglandin J2 + glutathione = prostaglandin J2-S-(R)-glutathione. The enzyme catalyses prostaglandin J2 + glutathione = prostaglandin J2-S-(S)-glutathione. It carries out the reaction prostaglandin A2 + glutathione = prostaglandin A2-S-(S)-glutathione. The catalysed reaction is 11(S)-hydroxy-14(S),15(S)-epoxy-(5Z,8Z,12E)-eicosatrienoate + glutathione = (11S,15S)-dihydroxy-14(R)-S-glutathionyl-(5Z,8Z,12E)-eicosatrienoate. In terms of biological role, conjugation of reduced glutathione to a wide number of exogenous and endogenous hydrophobic electrophiles. Protects against the thiol-mediated metal-catalyzed oxidative inactivation of enzymes. Involved in the formation of glutathione conjugates of both prostaglandin A2 (PGA2) and prostaglandin J2 (PGJ2). Participates in the formation of novel hepoxilin regioisomers. The sequence is that of Glutathione S-transferase Mu 1 (GSTM1) from Bos taurus (Bovine).